A 244-amino-acid polypeptide reads, in one-letter code: Tegument protein UL51 (244 aa).

Residue Cys-9 is the site of S-palmitoyl cysteine; by host attachment. The interval Gly-178–Gln-244 is disordered. The span at Pro-221 to Gln-244 shows a compositional bias: low complexity.

It belongs to the herpesviridae UL51 family. As to quaternary structure, oligomerizes. Interacts with UL7; this interaction mediates UL7 incorporation to virions. Interacts with UL14. Post-translationally, phosphorylated. Palmitoylation is necessary for Golgi localization.

The protein localises to the virion tegument. The protein resides in the host cytoplasm. It localises to the host Golgi apparatus. Functionally, plays several roles during the time course of infection, including egress of virus particles from the perinuclear space and secondary envelopment of cytoplasmic capsids that bud into specific trans-Golgi network (TGN)-derived membranes. Plays also an essential role in the maintenance of host cytoplasmic viral assembly center (cVAC) morphology in primary host neuronal cells. The chain is Tegument protein UL51 from Homo sapiens (Human).